A 197-amino-acid chain; its full sequence is Recombination protein RecR (197 aa).

Residues cysteine 56–cysteine 71 form a C4-type zinc finger. One can recognise a Toprim domain in the interval lysine 79–proline 174.

This sequence belongs to the RecR family.

Its function is as follows. May play a role in DNA repair. It seems to be involved in an RecBC-independent recombinational process of DNA repair. It may act with RecF and RecO. In Saccharophagus degradans (strain 2-40 / ATCC 43961 / DSM 17024), this protein is Recombination protein RecR.